The following is a 508-amino-acid chain: Serine/threonine-protein kinase VRK2 (508 aa).

The 291-residue stretch at 29-319 (WVLGKKIGSG…KKILNPHGIP (291 aa)) folds into the Protein kinase domain. Residues 35-43 (IGSGGFGLI) and Lys-61 contribute to the ATP site. Asp-166 (proton acceptor) is an active-site residue. Residue Thr-336 is modified to Phosphothreonine. The tract at residues 397–508 (TRRRQKYQES…MLVFLALFFL (112 aa)) is interaction with MAP3K7. A Phosphoserine modification is found at Ser-406. A helical; Anchor for type IV membrane protein transmembrane segment spans residues 487-507 (VYYYRIIIPVLLMLVFLALFF).

This sequence belongs to the protein kinase superfamily. CK1 Ser/Thr protein kinase family. VRK subfamily. In terms of assembly, isoform 1 interacts with MAP3K7, MAP2K7, MAP2K1 and KSR1. Isoform 1 and isoform 2 interact with RAN and MAPK8IP1. (Microbial infection) Isoform 1 interacts with Epstein-Barr virus BHRF1; this interaction is involved in protecting cells from apoptosis. As to quaternary structure, (Microbial infection) Isoform 1 interacts with vaccinia protein B12. In terms of processing, autophosphorylated. Isoform 1 and isoform 2 are expressed in various tumor cell lines. Expression of isoform 1 inversely correlates with ERBB2 in breast carcinomas (at protein level). Widely expressed. Highly expressed in fetal liver, skeletal muscle, pancreas, heart, peripheral blood leukocytes and testis.

Its subcellular location is the cytoplasm. It localises to the endoplasmic reticulum membrane. The protein resides in the mitochondrion membrane. The protein localises to the nucleus envelope. It is found in the nucleus. It carries out the reaction L-seryl-[protein] + ATP = O-phospho-L-seryl-[protein] + ADP + H(+). It catalyses the reaction L-threonyl-[protein] + ATP = O-phospho-L-threonyl-[protein] + ADP + H(+). With respect to regulation, RAN inhibits its autophosphorylation and its ability to phosphorylate histone H3. Functionally, serine/threonine kinase that regulates several signal transduction pathways. Isoform 1 modulates the stress response to hypoxia and cytokines, such as interleukin-1 beta (IL1B) and this is dependent on its interaction with MAPK8IP1, which assembles mitogen-activated protein kinase (MAPK) complexes. Inhibition of signal transmission mediated by the assembly of MAPK8IP1-MAPK complexes reduces JNK phosphorylation and JUN-dependent transcription. Phosphorylates 'Thr-18' of p53/TP53, histone H3, and may also phosphorylate MAPK8IP1. Phosphorylates BANF1 and disrupts its ability to bind DNA and reduces its binding to LEM domain-containing proteins. Down-regulates the transactivation of transcription induced by ERBB2, HRAS, BRAF, and MEK1. Blocks the phosphorylation of ERK in response to ERBB2 and HRAS. Can also phosphorylate the following substrates that are commonly used to establish in vitro kinase activity: casein, MBP and histone H2B, but it is not sure that this is physiologically relevant. Phosphorylates 'Thr-18' of p53/TP53, as well as histone H3. Reduces p53/TP53 ubiquitination by MDM2, promotes p53/TP53 acetylation by EP300 and thereby increases p53/TP53 stability and activity. The chain is Serine/threonine-protein kinase VRK2 (VRK2) from Homo sapiens (Human).